Here is a 316-residue protein sequence, read N- to C-terminus: Ribosomal RNA small subunit methyltransferase H (316 aa).

Residues 35–37, D55, F84, D105, and Q112 each bind S-adenosyl-L-methionine; that span reads AGH.

This sequence belongs to the methyltransferase superfamily. RsmH family.

Its subcellular location is the cytoplasm. The enzyme catalyses cytidine(1402) in 16S rRNA + S-adenosyl-L-methionine = N(4)-methylcytidine(1402) in 16S rRNA + S-adenosyl-L-homocysteine + H(+). In terms of biological role, specifically methylates the N4 position of cytidine in position 1402 (C1402) of 16S rRNA. The protein is Ribosomal RNA small subunit methyltransferase H of Streptococcus pneumoniae (strain P1031).